The chain runs to 221 residues: Histone H1.3 (221 aa).

Positions 1–17 are enriched in low complexity; the sequence is MSETAPAAPAAPAPVEK. The segment at 1-42 is disordered; that stretch reads MSETAPAAPAAPAPVEKTPVKKKAKKTGAAAGKRKASGPPVS. Ser2 bears the N-acetylserine mark. The residue at position 2 (Ser2) is a Phosphoserine. Lys17 is modified (N6-acetyllysine). Thr18 bears the Phosphothreonine mark. The span at 20–36 shows a compositional bias: basic residues; that stretch reads VKKKAKKTGAAAGKRKA. Residues Lys33, Lys35, and Lys53 each carry the N6-(beta-hydroxybutyryl)lysine modification. Residues 37–110 form the H15 domain; the sequence is SGPPVSELIT…GASGSFKLNK (74 aa). Arg55 carries the citrulline modification. N6-(beta-hydroxybutyryl)lysine is present on residues Lys65, Lys86, and Lys91. The interval 92 to 221 is disordered; it reads GTLVQTKGTG…KAKKAAPRKK (130 aa). A Phosphoserine; by PKC modification is found at Ser105. N6-(beta-hydroxybutyryl)lysine is present on residues Lys107 and Lys141. Composition is skewed to basic residues over residues 120–141, 150–161, 170–187, and 194–221; these read KAKK…KPKK, KTAKKTPKKAKK, KVSK…KKAA, and KAPK…PRKK.

This sequence belongs to the histone H1/H5 family. In terms of processing, H1 histones are progressively phosphorylated during the cell cycle, becoming maximally phosphorylated during late G2 phase and M phase, and being dephosphorylated sharply thereafter. Post-translationally, hydroxybutyrylation of histones is induced by starvation. Citrullination at Arg-55 (H1R54ci) by PADI4 takes place within the DNA-binding site of H1 and results in its displacement from chromatin and global chromatin decondensation, thereby promoting pluripotency and stem cell maintenance.

Its subcellular location is the nucleus. It is found in the chromosome. Its function is as follows. Histone H1 protein binds to linker DNA between nucleosomes forming the macromolecular structure known as the chromatin fiber. Histones H1 are necessary for the condensation of nucleosome chains into higher-order structured fibers. Also acts as a regulator of individual gene transcription through chromatin remodeling, nucleosome spacing and DNA methylation. The chain is Histone H1.3 from Mus musculus (Mouse).